The sequence spans 265 residues: Homeobox protein Nkx-6.3 (265 aa).

The segment at residues 139-198 (KKHTRPTFTGHQIFALEKTFEQTKYLAGPERARLAYSLGMTESQVKVWFQNRRTKWRKKS) is a DNA-binding region (homeobox). Positions 196–240 (KKSALEPSSSTPRAPGGAGAGAGGDRAPSENEDDEYNKPLDPDSD) are disordered.

The protein localises to the nucleus. Functionally, putative transcription factor, which may be involved in patterning of central nervous system and pancreas. This Homo sapiens (Human) protein is Homeobox protein Nkx-6.3 (NKX6-3).